A 216-amino-acid chain; its full sequence is Endoplasmic reticulum vesicle protein 25 (216 aa).

The N-terminal stretch at 1 to 25 is a signal peptide; the sequence is MGSSRLAMRSALGLFFLLFVQISLA. Over 26-185 the chain is Lumenal; the sequence is LKFDIAAGKG…TNESTNERVK (160 aa). Residues 36-126 enclose the GOLD domain; that stretch reads ERCIRNFVLK…HRSIELDVDI (91 aa). Residues 186–206 form a helical membrane-spanning segment; that stretch reads WFAFGTMGMLVGLGVWQVIYL. Residues 207 to 216 lie on the Cytoplasmic side of the membrane; sequence RAYFRSKHLI.

This sequence belongs to the EMP24/GP25L family.

The protein resides in the endoplasmic reticulum membrane. Its subcellular location is the golgi apparatus membrane. Constituent of COPII-coated endoplasmic reticulum-derived transport vesicles. Required for efficient transport of a subset of secretory proteins to the Golgi. Facilitates retrograde transport from the Golgi to the endoplasmic reticulum. The polypeptide is Endoplasmic reticulum vesicle protein 25 (erv25) (Emericella nidulans (strain FGSC A4 / ATCC 38163 / CBS 112.46 / NRRL 194 / M139) (Aspergillus nidulans)).